A 372-amino-acid polypeptide reads, in one-letter code: 18-hydroxynorfluorocurarine reductase (372 aa).

Zn(2+) contacts are provided by C47, D50, H69, E70, C100, C103, C106, C114, and C172. NADP(+)-binding positions include 197 to 202 (GLGGIG), K226, 283 to 285 (LGA), S307, and R354.

The protein belongs to the zinc-containing alcohol dehydrogenase family. In terms of assembly, homodimer. The cofactor is Zn(2+).

The enzyme catalyses (19E)-cur-19-en-17-al + NADP(+) = norfluorocurarine + NADPH + H(+). The catalysed reaction is 17,18-epoxy-17-hydroxycur-19-ene + NADP(+) = 18-hydroxynorfluorocurarine + NADPH + H(+). Its pathway is alkaloid biosynthesis. Functionally, alcohol dehydrogenase involved in the biosynthesis of curare monoterpene indole alkaloids (MIAs), natural products such as diaboline, a pharmacologically active compound used to regulate blood pressure. Curare alkaloids act as animal glycine receptor antagonists. Catalyzes the conversion of norfluorocurarine to desoxy Wieland-Gumlich aldehyde, and of 18-OH norfluorocurarine to Wieland-Gumlich aldehyde. This is 18-hydroxynorfluorocurarine reductase from Strychnos sp.